The following is a 236-amino-acid chain: Predicted GPI-anchored protein 43 (236 aa).

The first 24 residues, 1-24 (MHQRNHHSILLTLLLYLQSIVALA), serve as a signal peptide directing secretion. Asn192, Asn195, and Asn198 each carry an N-linked (GlcNAc...) asparagine glycan. Residue Gly208 is the site of GPI-anchor amidated glycine attachment. Residues 209 to 236 (SVCLTSSYLNSPIIILCAILTGTLFAMY) constitute a propeptide, removed in mature form.

It is found in the cell membrane. The sequence is that of Predicted GPI-anchored protein 43 (PGA43) from Candida albicans (strain SC5314 / ATCC MYA-2876) (Yeast).